The sequence spans 191 residues: Probable protein adenylyltransferase HI_0977 (191 aa).

The region spanning 37-162 (GSTKGLQQIH…NDLEIRFLLQ (126 aa)) is the Fido domain. ATP-binding positions include 67–68 (KG), 112–114 (GNG), Arg-118, and Gln-145.

It belongs to the fic family.

It carries out the reaction L-tyrosyl-[protein] + ATP = O-(5'-adenylyl)-L-tyrosyl-[protein] + diphosphate. It catalyses the reaction L-threonyl-[protein] + ATP = 3-O-(5'-adenylyl)-L-threonyl-[protein] + diphosphate. Probable adenylyltransferase that mediates the addition of adenosine 5'-monophosphate (AMP) to specific residues of target proteins. The polypeptide is Probable protein adenylyltransferase HI_0977 (Haemophilus influenzae (strain ATCC 51907 / DSM 11121 / KW20 / Rd)).